The chain runs to 363 residues: Glutamate 5-kinase (363 aa).

Lysine 6 contacts ATP. Positions 46, 133, and 145 each coordinate substrate. ATP is bound by residues 165-166 (TD) and 207-213 (TGGMHTK). Positions 271 to 349 (HGRLLLDGGA…REIEALLGYT (79 aa)) constitute a PUA domain.

It belongs to the glutamate 5-kinase family.

It is found in the cytoplasm. It carries out the reaction L-glutamate + ATP = L-glutamyl 5-phosphate + ADP. Its pathway is amino-acid biosynthesis; L-proline biosynthesis; L-glutamate 5-semialdehyde from L-glutamate: step 1/2. Functionally, catalyzes the transfer of a phosphate group to glutamate to form L-glutamate 5-phosphate. The sequence is that of Glutamate 5-kinase from Deinococcus radiodurans (strain ATCC 13939 / DSM 20539 / JCM 16871 / CCUG 27074 / LMG 4051 / NBRC 15346 / NCIMB 9279 / VKM B-1422 / R1).